We begin with the raw amino-acid sequence, 506 residues long: COP9 signalosome complex subunit 2 (506 aa).

A PCI domain is found at 252-420 (SEENWEEAQS…GTVVVESASD (169 aa)). Basic residues predominate over residues 482 to 491 (SGHRFRRGGK). The segment at 482–506 (SGHRFRRGGKGSKAGGGLGMKTGLF) is disordered. The segment covering 492–506 (GSKAGGGLGMKTGLF) has biased composition (gly residues).

It belongs to the CSN2 family. Component of the COP9 signalosome (CSN) complex.

The protein resides in the cytoplasm. Its subcellular location is the nucleus. Its function is as follows. Component of the COP9 signalosome (CSN) complex that acts as an regulator of the ubiquitin (Ubl) conjugation pathway by mediating the deneddylation of the cullin subunit of SCF-type E3 ubiquitin-protein ligase complexes. The CSN complex seems to link protein degradation to sexual development. Required for fruit body formation. This Emericella nidulans (strain FGSC A4 / ATCC 38163 / CBS 112.46 / NRRL 194 / M139) (Aspergillus nidulans) protein is COP9 signalosome complex subunit 2 (csnB).